The following is a 376-amino-acid chain: dTDP-4-amino-4,6-dideoxygalactose transaminase (376 aa).

Lysine 181 bears the N6-(pyridoxal phosphate)lysine mark.

It belongs to the DegT/DnrJ/EryC1 family. As to quaternary structure, homotetramer. The cofactor is pyridoxal 5'-phosphate.

It catalyses the reaction dTDP-4-amino-4,6-dideoxy-alpha-D-galactose + 2-oxoglutarate = dTDP-4-dehydro-6-deoxy-alpha-D-glucose + L-glutamate. The protein operates within bacterial outer membrane biogenesis; enterobacterial common antigen biosynthesis. Its function is as follows. Catalyzes the synthesis of dTDP-4-amino-4,6-dideoxy-D-galactose (dTDP-Fuc4N) from dTDP-4-keto-6-deoxy-D-glucose (dTDP-D-Glc4O) and L-glutamate. This chain is dTDP-4-amino-4,6-dideoxygalactose transaminase, found in Escherichia coli (strain K12).